A 365-amino-acid chain; its full sequence is TD and POZ domain-containing protein 3 (365 aa).

An MATH domain is found at 19 to 149 (KFCYNWTISN…EDQFTICCKV (131 aa)). The BTB domain maps to 188–250 (TDCCLLVAGH…EMMGFIYTGK (63 aa)).

The protein belongs to the Tdpoz family.

This is TD and POZ domain-containing protein 3 from Mus musculus (Mouse).